Consider the following 272-residue polypeptide: Formamidopyrimidine-DNA glycosylase (272 aa).

The Schiff-base intermediate with DNA role is filled by Pro-2. Glu-3 (proton donor) is an active-site residue. Lys-56 serves as the catalytic Proton donor; for beta-elimination activity. Positions 89, 108, and 149 each coordinate DNA. The FPG-type zinc finger occupies Leu-234–Pro-268. The active-site Proton donor; for delta-elimination activity is Arg-258.

Belongs to the FPG family. Monomer. Requires Zn(2+) as cofactor.

It carries out the reaction Hydrolysis of DNA containing ring-opened 7-methylguanine residues, releasing 2,6-diamino-4-hydroxy-5-(N-methyl)formamidopyrimidine.. The catalysed reaction is 2'-deoxyribonucleotide-(2'-deoxyribose 5'-phosphate)-2'-deoxyribonucleotide-DNA = a 3'-end 2'-deoxyribonucleotide-(2,3-dehydro-2,3-deoxyribose 5'-phosphate)-DNA + a 5'-end 5'-phospho-2'-deoxyribonucleoside-DNA + H(+). Its function is as follows. Involved in base excision repair of DNA damaged by oxidation or by mutagenic agents. Acts as a DNA glycosylase that recognizes and removes damaged bases. Has a preference for oxidized purines, such as 7,8-dihydro-8-oxoguanine (8-oxoG). Has AP (apurinic/apyrimidinic) lyase activity and introduces nicks in the DNA strand. Cleaves the DNA backbone by beta-delta elimination to generate a single-strand break at the site of the removed base with both 3'- and 5'-phosphates. This is Formamidopyrimidine-DNA glycosylase from Acinetobacter baylyi (strain ATCC 33305 / BD413 / ADP1).